A 947-amino-acid chain; its full sequence is Glutamate receptor 2.8 (947 aa).

The signal sequence occupies residues 1–26 (MNPKKNNNTFLSYFVCLFLLLEVGLG). Topologically, residues 27-577 (QNQISEIKVG…NTWVFLKPWG (551 aa)) are extracellular. Residues asparagine 42, asparagine 118, asparagine 333, asparagine 341, asparagine 348, asparagine 420, asparagine 478, and asparagine 524 are each glycosylated (N-linked (GlcNAc...) asparagine). A helical membrane pass occupies residues 578–598 (LDLWVTTACFFVLIGFVVWLF). The Cytoplasmic segment spans residues 599–607 (EHRVNTDFR). The helical transmembrane segment at 608–628 (GPPHHQIGTSFWFSFSTMVFA) threads the bilayer. Residues 629–632 (HREK) lie on the Cytoplasmic side of the membrane. The helical transmembrane segment at 633-653 (VVSNLARFVVVVWCFVVLVLT) threads the bilayer. Residues 654–819 (QSYTANLTSF…NRLSLRSFWG (166 aa)) are Extracellular-facing. N-linked (GlcNAc...) asparagine glycosylation is found at asparagine 659, asparagine 704, asparagine 723, and asparagine 779. A helical transmembrane segment spans residues 820 to 840 (LFLIAGIASFLALLIFVFLFL). Over 841–947 (YENRHTLCDD…ESDIECVVEQ (107 aa)) the chain is Cytoplasmic.

Belongs to the glutamate-gated ion channel (TC 1.A.10.1) family. As to quaternary structure, may form heteromers. Expressed predominantly in leaves.

It is found in the membrane. In terms of biological role, glutamate-gated receptor that probably acts as a non-selective cation channel. May be involved in light-signal transduction and calcium homeostasis via the regulation of calcium influx into cells. This chain is Glutamate receptor 2.8 (GLR2.8), found in Arabidopsis thaliana (Mouse-ear cress).